The primary structure comprises 480 residues: Caspase-8 (480 aa).

The propeptide occupies 1 to 218 (MDFQSCLYAI…ELCDSPREQD (218 aa)). DED domains follow at residues 3–80 (FQSC…NFLD) and 101–177 (YRVM…KIED). Serine 188 and serine 213 each carry phosphoserine. Lysine 226 is subject to N6-acetyllysine. Histidine 319 is an active-site residue. Tyrosine 336 is modified (phosphotyrosine). The active site involves cysteine 362. The propeptide occupies 377 to 387 (FEQQNHTLEVD). Serine 389 carries the phosphoserine; by CDK1 modification.

It belongs to the peptidase C14A family. In terms of assembly, heterotetramer that consists of two anti-parallel arranged heterodimers, each one formed by a 18 kDa (p18) and a 10 kDa (p10) subunit. Component of the death-induced signaling complex (DISC) composed of cell surface receptor FAS/CD95 or TNFRSF1A, adapter protein FADD and the CASP8 protease; recruitment of CASP8 to the complex is required for processing of CASP8 into the p18 and p10 subunits. Component of the AIM2 PANoptosome complex, a multiprotein complex that drives inflammatory cell death (PANoptosis). Interacts with CFLAR and PEA15. Interacts with RFFL and RNF34; negatively regulate CASP8 through proteasomal degradation. Interacts with TNFAIP8L2. Interacts with CASP8AP2. Interacts with NOL3; decreases CASP8 activity in a mitochondria localization- and phosphorylation-dependent manner and this interaction is dissociated by calcium. Interacts with UBR2. Interacts with RIPK1. Interacts with stimulated TNFRSF10B; this interaction is followed by CASP8 proteolytic cleavage and activation. Generation of the subunits requires association with the death-inducing signaling complex (DISC), whereas additional processing is likely due to the autocatalytic activity of the activated protease. GZMB and CASP10 can be involved in these processing events. Post-translationally, (Microbial infection) Proteolytically cleaved by the cowpox virus CRMA death inhibitory protein. In terms of processing, phosphorylation on Ser-389 during mitosis by CDK1 inhibits activation by proteolysis and prevents apoptosis. This phosphorylation occurs in cancer cell lines, as well as in primary breast tissues and lymphocytes. Expressed in a wide variety of tissues. Highest expression in spleen, thymus, lung, liver and kidney. Lower expression in heart, brain, testis and skeletal muscle.

Its subcellular location is the cytoplasm. It localises to the nucleus. The catalysed reaction is Strict requirement for Asp at position P1 and has a preferred cleavage sequence of (Leu/Asp/Val)-Glu-Thr-Asp-|-(Gly/Ser/Ala).. With respect to regulation, CASP8 activity is restricted by RIPK1. (Microbial infection) Inhibited by baculovirus p35 protein P35. In terms of biological role, thiol protease that plays a key role in programmed cell death by acting as a molecular switch for apoptosis, necroptosis and pyroptosis, and is required to prevent tissue damage during embryonic development and adulthood. Initiator protease that induces extrinsic apoptosis by mediating cleavage and activation of effector caspases responsible for FAS/CD95-mediated and TNFRSF1A-induced cell death. Cleaves and activates effector caspases CASP3, CASP4, CASP6, CASP7, CASP9 and CASP10. Binding to the adapter molecule FADD recruits it to either receptor FAS/CD95 or TNFRSF1A. The resulting aggregate called the death-inducing signaling complex (DISC) performs CASP8 proteolytic activation. The active dimeric enzyme is then liberated from the DISC and free to activate downstream apoptotic proteases. Proteolytic fragments of the N-terminal propeptide (termed CAP3, CAP5 and CAP6) are likely retained in the DISC. In addition to extrinsic apoptosis, also acts as a negative regulator of necroptosis: acts by cleaving RIPK1 at 'Asp-325', which is crucial to inhibit RIPK1 kinase activity, limiting TNF-induced apoptosis, necroptosis and inflammatory response. Also able to initiate pyroptosis by mediating cleavage and activation of gasdermin-C and -D (GSDMC and GSDMD, respectively): gasdermin cleavage promotes release of the N-terminal moiety that binds to membranes and forms pores, triggering pyroptosis. Initiates pyroptosis following inactivation of MAP3K7/TAK1. Also acts as a regulator of innate immunity by mediating cleavage and inactivation of N4BP1 downstream of TLR3 or TLR4, thereby promoting cytokine production. May participate in the Granzyme B (GZMB) cell death pathways. Cleaves PARP1 and PARP2. The polypeptide is Caspase-8 (Mus musculus (Mouse)).